Reading from the N-terminus, the 470-residue chain is Glutamate--tRNA ligase (470 aa).

The short motif at 9–19 (PSPTGFLHVGG) is the 'HIGH' region element. The 'KMSKS' region signature appears at 236–240 (RLSKR). K239 is a binding site for ATP.

Belongs to the class-I aminoacyl-tRNA synthetase family. Glutamate--tRNA ligase type 1 subfamily. In terms of assembly, monomer.

It is found in the cytoplasm. The catalysed reaction is tRNA(Glu) + L-glutamate + ATP = L-glutamyl-tRNA(Glu) + AMP + diphosphate. Its function is as follows. Catalyzes the attachment of glutamate to tRNA(Glu) in a two-step reaction: glutamate is first activated by ATP to form Glu-AMP and then transferred to the acceptor end of tRNA(Glu). This is Glutamate--tRNA ligase from Legionella pneumophila (strain Paris).